A 356-amino-acid chain; its full sequence is Phosphoribosylformylglycinamidine cyclo-ligase (356 aa).

Belongs to the AIR synthase family.

It localises to the cytoplasm. The catalysed reaction is 2-formamido-N(1)-(5-O-phospho-beta-D-ribosyl)acetamidine + ATP = 5-amino-1-(5-phospho-beta-D-ribosyl)imidazole + ADP + phosphate + H(+). It functions in the pathway purine metabolism; IMP biosynthesis via de novo pathway; 5-amino-1-(5-phospho-D-ribosyl)imidazole from N(2)-formyl-N(1)-(5-phospho-D-ribosyl)glycinamide: step 2/2. The chain is Phosphoribosylformylglycinamidine cyclo-ligase from Sinorhizobium fredii (strain NBRC 101917 / NGR234).